We begin with the raw amino-acid sequence, 250 residues long: ATP synthase subunit a (250 aa).

Helical transmembrane passes span 27-47, 86-106, 129-149, 191-211, and 219-239; these read TDTV…AFYL, FVLP…WLAV, INYV…AGIW, IFAG…IMWA, and FDLF…ILYF.

Belongs to the ATPase A chain family. F-type ATPases have 2 components, CF(1) - the catalytic core - and CF(0) - the membrane proton channel. CF(1) has five subunits: alpha(3), beta(3), gamma(1), delta(1), epsilon(1). CF(0) has three main subunits: a(1), b(2) and c(9-12). The alpha and beta chains form an alternating ring which encloses part of the gamma chain. CF(1) is attached to CF(0) by a central stalk formed by the gamma and epsilon chains, while a peripheral stalk is formed by the delta and b chains.

Its subcellular location is the cell membrane. Functionally, key component of the proton channel; it plays a direct role in the translocation of protons across the membrane. In Mycobacterium bovis (strain ATCC BAA-935 / AF2122/97), this protein is ATP synthase subunit a.